Consider the following 403-residue polypeptide: Phosphoglycerate kinase (403 aa).

Substrate is bound by residues 22 to 24, Arg-37, 60 to 63, Arg-119, and Arg-156; these read DLN and HLGR. ATP is bound by residues Lys-206, Gly-302, Glu-333, and 359–362; that span reads GGDS.

The protein belongs to the phosphoglycerate kinase family. As to quaternary structure, monomer.

It localises to the cytoplasm. It carries out the reaction (2R)-3-phosphoglycerate + ATP = (2R)-3-phospho-glyceroyl phosphate + ADP. Its pathway is carbohydrate degradation; glycolysis; pyruvate from D-glyceraldehyde 3-phosphate: step 2/5. The sequence is that of Phosphoglycerate kinase from Streptomyces griseus subsp. griseus (strain JCM 4626 / CBS 651.72 / NBRC 13350 / KCC S-0626 / ISP 5235).